The sequence spans 428 residues: GTPase Obg (428 aa).

One can recognise an Obg domain in the interval 1–158 (MFVDQVKVYV…RYIVLELKVL (158 aa)). The segment at 117–143 (ARGGRGGRGNSRFATPANPAPQLSENG) is disordered. The OBG-type G domain maps to 159 to 329 (ADVGLVGFPS…LLFEVANQLE (171 aa)). GTP contacts are provided by residues 165-172 (GFPSVGKS), 190-194 (FTTLV), 212-215 (DLPG), 282-285 (NKMD), and 310-312 (SAV). Mg(2+)-binding residues include Ser172 and Thr192. In terms of domain architecture, OCT spans 350 to 428 (TMENEEVPFN…LLEFEFEFID (79 aa)).

This sequence belongs to the TRAFAC class OBG-HflX-like GTPase superfamily. OBG GTPase family. As to quaternary structure, monomer. Interacts with TasA (AC P54507) in pull-down experiments. Mg(2+) is required as a cofactor.

It localises to the cytoplasm. Inhibited by GDP; less than 20 uM ppGpp stimulates the GTPase, while higher concentrations inhibit. In terms of biological role, necessary for the transition from vegetative growth to stage 0 or stage II of sporulation, but sporulation subsequent to these stages is unaffected at 45 degrees Celsius. This ts effect is probably due solely to the E-79 mutation. Required for expression of early sporulation genes, further suggesting a role in the induction of sporulation. Depletion effects on sporulation can be partially suppressed by missense mutations in spo0A. Strains depleted for obg stop growing after about 3 hours and do not induce the sigma-B factor following ethanol stress. It cofractionates with the ribosome and upstream stress response regulators RsbR, RsbS and RsbT in size fractionation columns, suggesting the ribosome might serve as a possible mediator of the activity of obg and the stress induction of sigma-B. In glycerol gradients partially associates with ribosomes; this is stabilized by a nonhydrolyzable GTP-analog and to a lesser extent GTP and GDP. An essential GTPase which binds GTP, GDP and possibly (p)ppGpp with moderate affinity, with high nucleotide exchange rates and a fairly low GTP hydrolysis rate. Plays a role in control of the cell cycle, stress response, ribosome biogenesis and in those bacteria that undergo differentiation, in morphogenesis control. This is GTPase Obg from Bacillus subtilis (strain 168).